Reading from the N-terminus, the 183-residue chain is 1,6-anhydro-N-acetylmuramyl-L-alanine amidase AmpD (183 aa).

In terms of domain architecture, N-acetylmuramoyl-L-alanine amidase spans 30-167 (LLVVHNISLP…APDRKTDPGP (138 aa)). His-34 lines the Zn(2+) pocket. The Proton acceptor role is filled by Glu-116. 2 residues coordinate Zn(2+): His-154 and Asp-164.

The protein belongs to the N-acetylmuramoyl-L-alanine amidase 2 family. Zn(2+) is required as a cofactor.

The protein resides in the cytoplasm. The enzyme catalyses Hydrolyzes the link between N-acetylmuramoyl residues and L-amino acid residues in certain cell-wall glycopeptides.. Functionally, involved in cell wall peptidoglycan recycling. Specifically cleaves the amide bond between the lactyl group of N-acetylmuramic acid and the alpha-amino group of the L-alanine in degradation products containing an anhydro N-acetylmuramyl moiety. Is also involved in beta-lactamase induction. This Escherichia coli (strain K12) protein is 1,6-anhydro-N-acetylmuramyl-L-alanine amidase AmpD (ampD).